The chain runs to 114 residues: Transcription factor S1 (114 aa).

The segment at 1 to 43 is N-ZR; the sequence is MIVVKFCPKCNSMMVPKKSNGKNVYRCTKCGYEKEVPETTIVV. Positions 7, 10, 27, 30, 75, and 78 each coordinate Zn(2+). A C-ZR region spans residues 63–114; that stretch reads MPSGAQKIKGVLCPSCKNDEAYFWILQTRRADEPPTRFYKCTKCGKVWREYE. The TFIIS-type zinc finger occupies 71–111; the sequence is KGVLCPSCKNDEAYFWILQTRRADEPPTRFYKCTKCGKVWR. Catalysis depends on residues D94 and E95. The Zn(2+) site is built by C103 and C106.

This sequence belongs to the archaeal RpoM/eukaryotic RPA12/RPB9/RPC11 RNA polymerase family. Interacts with RNA polymerase; probably competes with TFS4 for the same binding site. Zn(2+) is required as a cofactor.

Induces RNA cleavage activity in the RNA polymerase. Induces rapid cleavage of a stalled transcription elongation complex with a 2-nucleotide reduction at the 3' end of the nascent RNA. Truncated RNA is able to resume elongation. During transcription elongation it enhances processivity. Involved in transcriptional proofreading and fidelity. Misincorporation of nucleotides during elongation of transcription leads to arrested elongation complexes which are rescued by TFS-promoted removal of a dinucleotide from the 3'-end. TFS1 is able to induce a cleavage resynthesis cycle in stalled elongation complexes (resulting from the next missing nucleotide or a reduced incorporation rate of a wrong nucleotide) preventing misincorporation and enabling proofreading in a post-incorporation manner. Pausing of elongation complexes is the main determinant of TFS-induced RNA cleavage. This is Transcription factor S1 from Saccharolobus solfataricus (strain ATCC 35092 / DSM 1617 / JCM 11322 / P2) (Sulfolobus solfataricus).